The primary structure comprises 321 residues: Glyoxylate/hydroxypyruvate reductase B (321 aa).

Residues Arg-237 and Glu-266 contribute to the active site. Catalysis depends on His-285, which acts as the Proton donor.

This sequence belongs to the D-isomer specific 2-hydroxyacid dehydrogenase family. GhrB subfamily. Homodimer.

Its subcellular location is the cytoplasm. The catalysed reaction is glycolate + NADP(+) = glyoxylate + NADPH + H(+). It carries out the reaction (R)-glycerate + NAD(+) = 3-hydroxypyruvate + NADH + H(+). The enzyme catalyses (R)-glycerate + NADP(+) = 3-hydroxypyruvate + NADPH + H(+). In terms of biological role, catalyzes the NADPH-dependent reduction of glyoxylate and hydroxypyruvate into glycolate and glycerate, respectively. The chain is Glyoxylate/hydroxypyruvate reductase B from Erwinia tasmaniensis (strain DSM 17950 / CFBP 7177 / CIP 109463 / NCPPB 4357 / Et1/99).